A 625-amino-acid polypeptide reads, in one-letter code: Isocitrate dehydrogenase kinase/phosphatase (625 aa).

ATP-binding positions include 325 to 331 (APGIKGM) and Lys-346. Asp-381 is a catalytic residue. The interval 596-625 (RRHSPGRNDHELLTHLPPEPMLTGLSGMTP) is disordered.

The protein belongs to the AceK family.

It localises to the cytoplasm. It catalyses the reaction L-seryl-[isocitrate dehydrogenase] + ATP = O-phospho-L-seryl-[isocitrate dehydrogenase] + ADP + H(+). Bifunctional enzyme which can phosphorylate or dephosphorylate isocitrate dehydrogenase (IDH) on a specific serine residue. This is a regulatory mechanism which enables bacteria to bypass the Krebs cycle via the glyoxylate shunt in response to the source of carbon. When bacteria are grown on glucose, IDH is fully active and unphosphorylated, but when grown on acetate or ethanol, the activity of IDH declines drastically concomitant with its phosphorylation. This chain is Isocitrate dehydrogenase kinase/phosphatase, found in Polaromonas sp. (strain JS666 / ATCC BAA-500).